The primary structure comprises 88 residues: ATPase inhibitor mai-1, mitochondrial (88 aa).

A compositionally biased stretch (gly residues) spans 1-18 (MSGSGSGSGAGHGGGSGG). The disordered stretch occupies residues 1–41 (MSGSGSGSGAGHGGGSGGSIREAGGSLGMMGATREEEYFRR). A coiled-coil region spans residues 39-87 (FRRQQKDQLDNLKKKLEADMTQSQQEIRDHEKVLEQHQQRLKEIEKGHG).

It belongs to the ATPase inhibitor family. In terms of processing, does not seem to include a transit peptide.

The protein localises to the mitochondrion. Its function is as follows. Thought to be a regulatory component of the ATP-synthesizing complex in the mitochondria. This chain is ATPase inhibitor mai-1, mitochondrial (mai-1), found in Caenorhabditis elegans.